Consider the following 288-residue polypeptide: Inorganic pyrophosphatase (288 aa).

Diphosphate is bound at residue R80. Mg(2+) contacts are provided by D117, D122, and D154. The tract at residues 252–271 is disordered; sequence TPSYSDAAAQEIPSASPAPA. The span at 258 to 271 shows a compositional bias: low complexity; the sequence is AAAQEIPSASPAPA.

The protein belongs to the PPase family. Mg(2+) is required as a cofactor.

The protein localises to the cytoplasm. It carries out the reaction diphosphate + H2O = 2 phosphate + H(+). This Candida albicans (strain SC5314 / ATCC MYA-2876) (Yeast) protein is Inorganic pyrophosphatase (IPP1).